Reading from the N-terminus, the 230-residue chain is Prolactin-6A1 (230 aa).

Residues 1 to 29 (MLSLSQPCFSGTLLMLLASNFLLWKNVAP) form the signal peptide. The N-linked (GlcNAc...) asparagine glycan is linked to Asn57. 2 cysteine pairs are disulfide-bonded: Cys89/Cys205 and Cys222/Cys230.

It belongs to the somatotropin/prolactin family. As to expression, expressed in both placenta and decidual tissues. Detected first in deciduals cells early in gestation and in trophoblasts later in pregnancy.

It is found in the secreted. This Mus musculus (Mouse) protein is Prolactin-6A1 (Prl6a1).